Consider the following 290-residue polypeptide: MYG1 protein CPn_0489/CP_0265/CPj0489/CpB0509 (290 aa).

It belongs to the MYG1 family.

The sequence is that of MYG1 protein CPn_0489/CP_0265/CPj0489/CpB0509 from Chlamydia pneumoniae (Chlamydophila pneumoniae).